The sequence spans 225 residues: UPF0758 protein swp_2203 (225 aa).

Residues Ile102–Ile224 enclose the MPN domain. Residues His173, His175, and Asp186 each contribute to the Zn(2+) site. The JAMM motif signature appears at His173–Asp186.

The protein belongs to the UPF0758 family.

The sequence is that of UPF0758 protein swp_2203 from Shewanella piezotolerans (strain WP3 / JCM 13877).